The following is a 137-amino-acid chain: Putative pre-16S rRNA nuclease (137 aa).

Belongs to the YqgF nuclease family.

It localises to the cytoplasm. Functionally, could be a nuclease involved in processing of the 5'-end of pre-16S rRNA. The sequence is that of Putative pre-16S rRNA nuclease from Bacillus cereus (strain G9842).